We begin with the raw amino-acid sequence, 205 residues long: tRNA 2-(methylsulfanyl)-N(6)-isopentenyladenosine(37) hydroxylase (205 aa).

Residues E38, E69, H72, E122, E151, and H154 each contribute to the Fe cation site.

This sequence belongs to the MiaE family. In terms of assembly, homodimer. It depends on Fe cation as a cofactor.

The catalysed reaction is 2-methylsulfanyl-N(6)-dimethylallyladenosine(37) in tRNA + AH2 + O2 = N(6)-[(2E)-4-hydroxy-3-methylbut-2-en-1-yl]-2-(methylsulfanyl)adenosine(37) in tRNA + A + H2O. It participates in tRNA modification; 2-methylthio-N-6-(cis-hydroxy)isopentenyl adenosine-tRNA biosynthesis. Involved in specific tRNA modification. Catalyzes the oxygen-dependent hydroxylation of 2-methylthio-N-6-isopentenyl adenosine (ms2i6A) to produce 2-methylthio-N-6-(cis-hydroxy)isopentenyl adenosine (ms2io6A) at position 37 in tRNAs. The chain is tRNA 2-(methylsulfanyl)-N(6)-isopentenyladenosine(37) hydroxylase from Pseudomonas putida (strain ATCC 47054 / DSM 6125 / CFBP 8728 / NCIMB 11950 / KT2440).